A 437-amino-acid chain; its full sequence is Protein farnesyltransferase subunit beta (437 aa).

PFTB repeat units follow at residues 123–164 (ATDV…CIIG), 174–215 (REKL…SLTN), 222–263 (FEGT…VILK), 270–312 (LKSL…PLLH), and 332–374 (QQAL…SIAQ). Residues 248 to 251 (HGGY) and 291 to 294 (RCNK) each bind (2E,6E)-farnesyl diphosphate. Residues Asp297 and Cys299 each coordinate Zn(2+). Residue 300–303 (YSFW) coordinates (2E,6E)-farnesyl diphosphate. Zn(2+) is bound at residue His362. Ser432 carries the post-translational modification Phosphoserine. At Thr436 the chain carries Phosphothreonine.

The protein belongs to the protein prenyltransferase subunit beta family. Heterodimer of FNTA and FNTB. Requires Zn(2+) as cofactor.

The enzyme catalyses L-cysteinyl-[protein] + (2E,6E)-farnesyl diphosphate = S-(2E,6E)-farnesyl-L-cysteinyl-[protein] + diphosphate. In terms of biological role, essential subunit of the farnesyltransferase complex. Catalyzes the transfer of a farnesyl moiety from farnesyl diphosphate to a cysteine at the fourth position from the C-terminus of several proteins having the C-terminal sequence Cys-aliphatic-aliphatic-X. This chain is Protein farnesyltransferase subunit beta (Fntb), found in Rattus norvegicus (Rat).